We begin with the raw amino-acid sequence, 267 residues long: Eukaryotic translation initiation factor 3 subunit J (267 aa).

Disordered stretches follow at residues 1 to 128 (MAPS…DIDL) and 220 to 241 (KMRE…KTKV). Acidic residues predominate over residues 28–46 (DEEEEDVLDSWDAAEDSEV). Residues 44-96 (SEVEREKAAKAAAAAAKAEAEAAAKKKSKAQRIEEHKQERKKQAEANESDEDS) are a coiled coil. Residues 74–88 (QRIEEHKQERKKQAE) are compositionally biased toward basic and acidic residues. Residues 90–100 (NESDEDSDEDE) show a composition bias toward acidic residues. 2 stretches are compositionally biased toward basic and acidic residues: residues 108–121 (RRTE…HAQD) and 220–231 (KMREERAADKGN).

The protein belongs to the eIF-3 subunit J family. Component of the eukaryotic translation initiation factor 3 (eIF-3) complex.

It is found in the cytoplasm. Its function is as follows. Component of the eukaryotic translation initiation factor 3 (eIF-3) complex, which is involved in protein synthesis of a specialized repertoire of mRNAs and, together with other initiation factors, stimulates binding of mRNA and methionyl-tRNAi to the 40S ribosome. The eIF-3 complex specifically targets and initiates translation of a subset of mRNAs involved in cell proliferation. The protein is Eukaryotic translation initiation factor 3 subunit J (hcr1) of Neosartorya fischeri (strain ATCC 1020 / DSM 3700 / CBS 544.65 / FGSC A1164 / JCM 1740 / NRRL 181 / WB 181) (Aspergillus fischerianus).